The chain runs to 59 residues: UPF0434 protein Pnec_0311 (59 aa).

Belongs to the UPF0434 family.

This chain is UPF0434 protein Pnec_0311, found in Polynucleobacter necessarius subsp. necessarius (strain STIR1).